A 126-amino-acid polypeptide reads, in one-letter code: Large ribosomal subunit protein bL20c (126 aa).

This sequence belongs to the bacterial ribosomal protein bL20 family.

It is found in the plastid. The protein localises to the chloroplast. Binds directly to 23S ribosomal RNA and is necessary for the in vitro assembly process of the 50S ribosomal subunit. It is not involved in the protein synthesizing functions of that subunit. This is Large ribosomal subunit protein bL20c from Guizotia abyssinica (Niger).